Here is a 129-residue protein sequence, read N- to C-terminus: Transmembrane protein 105 (129 aa).

2 helical membrane passes run 23-43 (AGNVIGQLIYLLTWSLFTAWL) and 94-114 (FLAGGLHLVPSSLSLAACGVV).

The protein resides in the membrane. This Homo sapiens (Human) protein is Transmembrane protein 105 (TMEM105).